The primary structure comprises 131 residues: D-ribose pyranase (131 aa).

The active-site Proton donor is histidine 20. Substrate-binding positions include aspartate 28, histidine 98, and 120-122 (YAN).

This sequence belongs to the RbsD / FucU family. RbsD subfamily. In terms of assembly, homodecamer.

Its subcellular location is the cytoplasm. It carries out the reaction beta-D-ribopyranose = beta-D-ribofuranose. The protein operates within carbohydrate metabolism; D-ribose degradation; D-ribose 5-phosphate from beta-D-ribopyranose: step 1/2. Its function is as follows. Catalyzes the interconversion of beta-pyran and beta-furan forms of D-ribose. The polypeptide is D-ribose pyranase (Bacillus cereus (strain G9842)).